A 241-amino-acid chain; its full sequence is B9 domain-containing protein 1 (241 aa).

Residues 1–42 are disordered; the sequence is MSASEGISLPGNEETTPPHEKHKQKAKKAKKKSRSAKESVPN. A compositionally biased stretch (basic residues) spans 20-34; the sequence is EKHKQKAKKAKKKSR. The C2 B9-type domain maps to 53–197; that stretch reads FSLSIVGQIV…TSWLLRREPE (145 aa).

This sequence belongs to the B9D family. In terms of assembly, probable component of the tectonic-like complex (also named MKS complex), composed of B9d1, B9d2, Cc2d2a, Mks1 and tctn. Expressed in type I sensory neurons (at protein level). Expressed in spermatids and spermatocytes (at protein level).

It localises to the cytoplasm. The protein localises to the cytoskeleton. The protein resides in the cilium basal body. Functionally, probable component of the tectonic-like complex (also named MKS complex), a complex localized at the transition zone of primary cilia. Required for ciliary structure and function. This chain is B9 domain-containing protein 1, found in Drosophila melanogaster (Fruit fly).